A 635-amino-acid polypeptide reads, in one-letter code: CCR4-NOT transcription complex subunit 10 (635 aa).

Thr-45 carries the post-translational modification Phosphothreonine. A coiled-coil region spans residues 131 to 165 (LVARLEALEKAMAALVATLQLQLLLATNQLNRAEA). 2 disordered regions span residues 396–416 (EERQ…QSAG) and 450–474 (SEDV…DNNF). Basic and acidic residues predominate over residues 456–470 (PEPKDPTQESWRHPQ).

This sequence belongs to the CNOT10 family. As to quaternary structure, component of the CCR4-NOT complex. CNOT10 and CNOT11 form a subcomplex docked to the CNOT1 scaffold.

It localises to the cytoplasm. Its subcellular location is the nucleus. In terms of biological role, component of the CCR4-NOT complex which is one of the major cellular mRNA deadenylases and is linked to various cellular processes including bulk mRNA degradation, miRNA-mediated repression, translational repression during translational initiation and general transcription regulation. Additional complex functions may be a consequence of its influence on mRNA expression. Is not required for association of CNOT7 to the CCR4-NOT complex. This is CCR4-NOT transcription complex subunit 10 (Not10) from Drosophila melanogaster (Fruit fly).